We begin with the raw amino-acid sequence, 561 residues long: Ribulokinase (561 aa).

This sequence belongs to the ribulokinase family.

The enzyme catalyses D-ribulose + ATP = D-ribulose 5-phosphate + ADP + H(+). It carries out the reaction L-ribulose + ATP = L-ribulose 5-phosphate + ADP + H(+). Its pathway is carbohydrate degradation; L-arabinose degradation via L-ribulose; D-xylulose 5-phosphate from L-arabinose (bacterial route): step 2/3. The polypeptide is Ribulokinase (Shouchella clausii (strain KSM-K16) (Alkalihalobacillus clausii)).